Consider the following 294-residue polypeptide: Phosphatidylserine decarboxylase proenzyme (294 aa).

Catalysis depends on charge relay system; for autoendoproteolytic cleavage activity residues aspartate 113, histidine 169, and serine 256. Serine 256 serves as the catalytic Schiff-base intermediate with substrate; via pyruvic acid; for decarboxylase activity. Serine 256 carries the post-translational modification Pyruvic acid (Ser); by autocatalysis.

It belongs to the phosphatidylserine decarboxylase family. PSD-B subfamily. Prokaryotic type II sub-subfamily. As to quaternary structure, heterodimer of a large membrane-associated beta subunit and a small pyruvoyl-containing alpha subunit. It depends on pyruvate as a cofactor. Post-translationally, is synthesized initially as an inactive proenzyme. Formation of the active enzyme involves a self-maturation process in which the active site pyruvoyl group is generated from an internal serine residue via an autocatalytic post-translational modification. Two non-identical subunits are generated from the proenzyme in this reaction, and the pyruvate is formed at the N-terminus of the alpha chain, which is derived from the carboxyl end of the proenzyme. The autoendoproteolytic cleavage occurs by a canonical serine protease mechanism, in which the side chain hydroxyl group of the serine supplies its oxygen atom to form the C-terminus of the beta chain, while the remainder of the serine residue undergoes an oxidative deamination to produce ammonia and the pyruvoyl prosthetic group on the alpha chain. During this reaction, the Ser that is part of the protease active site of the proenzyme becomes the pyruvoyl prosthetic group, which constitutes an essential element of the active site of the mature decarboxylase.

It is found in the cell membrane. The catalysed reaction is a 1,2-diacyl-sn-glycero-3-phospho-L-serine + H(+) = a 1,2-diacyl-sn-glycero-3-phosphoethanolamine + CO2. The protein operates within phospholipid metabolism; phosphatidylethanolamine biosynthesis; phosphatidylethanolamine from CDP-diacylglycerol: step 2/2. Its function is as follows. Catalyzes the formation of phosphatidylethanolamine (PtdEtn) from phosphatidylserine (PtdSer). This chain is Phosphatidylserine decarboxylase proenzyme, found in Clostridium perfringens (strain SM101 / Type A).